A 431-amino-acid polypeptide reads, in one-letter code: Glucose-1-phosphate adenylyltransferase (431 aa).

Beta-D-fructose 1,6-bisphosphate is bound at residue lysine 39. Residues arginine 40, histidine 46, and arginine 52 each contribute to the AMP site. Tyrosine 114 is an alpha-D-glucose 1-phosphate binding site. Arginine 130 provides a ligand contact to AMP. Residues glycine 179, 194–195 (EK), and serine 212 each bind alpha-D-glucose 1-phosphate. Residues glutamate 370 and arginine 386 each contribute to the AMP site. Beta-D-fructose 1,6-bisphosphate is bound by residues 419–423 (REMLR) and 429–431 (QER).

Belongs to the bacterial/plant glucose-1-phosphate adenylyltransferase family. As to quaternary structure, homotetramer.

It catalyses the reaction alpha-D-glucose 1-phosphate + ATP + H(+) = ADP-alpha-D-glucose + diphosphate. The protein operates within glycan biosynthesis; glycogen biosynthesis. With respect to regulation, allosterically activated by fructose-1,6-bisphosphate (F16BP) and inhibited by AMP. Its function is as follows. Involved in the biosynthesis of ADP-glucose, a building block required for the elongation reactions to produce glycogen. Catalyzes the reaction between ATP and alpha-D-glucose 1-phosphate (G1P) to produce pyrophosphate and ADP-Glc. This Escherichia fergusonii (strain ATCC 35469 / DSM 13698 / CCUG 18766 / IAM 14443 / JCM 21226 / LMG 7866 / NBRC 102419 / NCTC 12128 / CDC 0568-73) protein is Glucose-1-phosphate adenylyltransferase.